The sequence spans 207 residues: Small ribosomal subunit protein uS4 (207 aa).

The disordered stretch occupies residues alanine 26–serine 47. Over residues asparagine 28–asparagine 39 the composition is skewed to polar residues. Positions arginine 95 to isoleucine 158 constitute an S4 RNA-binding domain.

It belongs to the universal ribosomal protein uS4 family. Part of the 30S ribosomal subunit. Contacts protein S5. The interaction surface between S4 and S5 is involved in control of translational fidelity.

Functionally, one of the primary rRNA binding proteins, it binds directly to 16S rRNA where it nucleates assembly of the body of the 30S subunit. In terms of biological role, with S5 and S12 plays an important role in translational accuracy. This is Small ribosomal subunit protein uS4 from Orientia tsutsugamushi (strain Boryong) (Rickettsia tsutsugamushi).